The sequence spans 95 residues: Large ribosomal subunit protein bL27 (95 aa).

The propeptide occupies 1 to 9 (MLKMNLQFF).

The protein belongs to the bacterial ribosomal protein bL27 family. Post-translationally, the N-terminus is cleaved by ribosomal processing cysteine protease Prp.

The protein is Large ribosomal subunit protein bL27 of Lachnoclostridium phytofermentans (strain ATCC 700394 / DSM 18823 / ISDg) (Clostridium phytofermentans).